The following is a 165-amino-acid chain: MKVDSSEAVYAGMKDAGIDFAVSVPCVNLRTVLEMVDADPAIMHVPVTREEEGFGVAAGAHMAGKTTAILMQNSGLGNSVNVLASLYSLYHIPITMIVSHRGTEGEFMEAQVPMGRATGDILRILEIPFRTPRSPAEARESIGELTDISLRTSKAVAVLLDVSYW.

Belongs to the ComD family. In terms of assembly, heterododecamer composed of 6 subunits alpha and 6 subunits beta.

The enzyme catalyses 3-sulfopyruvate + H(+) = sulfoacetaldehyde + CO2. The protein operates within cofactor biosynthesis; coenzyme M biosynthesis; sulfoacetaldehyde from phosphoenolpyruvate and sulfite: step 4/4. Its function is as follows. Involved in the biosynthesis of the coenzyme M (2-mercaptoethanesulfonic acid). Catalyzes the decarboxylation of sulfopyruvate to sulfoacetaldehyde. This is Sulfopyruvate decarboxylase subunit alpha from Methanothermobacter thermautotrophicus (strain ATCC 29096 / DSM 1053 / JCM 10044 / NBRC 100330 / Delta H) (Methanobacterium thermoautotrophicum).